Consider the following 161-residue polypeptide: Protein-export protein SecB (161 aa).

Belongs to the SecB family. In terms of assembly, homotetramer, a dimer of dimers. One homotetramer interacts with 1 SecA dimer.

The protein resides in the cytoplasm. Its function is as follows. One of the proteins required for the normal export of preproteins out of the cell cytoplasm. It is a molecular chaperone that binds to a subset of precursor proteins, maintaining them in a translocation-competent state. It also specifically binds to its receptor SecA. This chain is Protein-export protein SecB, found in Shewanella sp. (strain MR-7).